We begin with the raw amino-acid sequence, 301 residues long: Phosducin-like protein (301 aa).

Thr2 carries the N-acetylthreonine modification. The disordered stretch occupies residues 18 to 57 (SSSEDEDSDHEDKDRGRCAPASSSVPAEAELAGEGISVNT). Ser20 and Ser25 each carry phosphoserine. A compositionally biased stretch (low complexity) spans 36–49 (APASSSVPAEAELA). A Phosducin domain is found at 36–299 (APASSSVPAE…TCHSEDSDLE (264 aa)). Ser226, Ser293, and Ser296 each carry phosphoserine.

The protein belongs to the phosducin family. Forms a complex with the beta and gamma subunits of the GTP-binding protein, transducin. Interacts with the CCT chaperonin complex.

It is found in the cell projection. It localises to the cilium. In terms of biological role, acts as a positive regulator of hedgehog signaling and regulates ciliary function. Functions as a co-chaperone for CCT in the assembly of heterotrimeric G protein complexes, facilitates the assembly of both Gbeta-Ggamma and RGS-Gbeta5 heterodimers. Functionally, acts as a negative regulator of heterotrimeric G proteins assembly by trapping the preloaded G beta subunits inside the CCT chaperonin. This chain is Phosducin-like protein (PDCL), found in Homo sapiens (Human).